We begin with the raw amino-acid sequence, 436 residues long: Phosphomethylpyrimidine synthase (436 aa).

Substrate contacts are provided by residues asparagine 69, methionine 98, tyrosine 127, histidine 163, 185 to 187, 226 to 229, and glutamate 265; these read SRG and DACR. Histidine 269 lines the Zn(2+) pocket. Tyrosine 292 contacts substrate. Histidine 333 provides a ligand contact to Zn(2+). [4Fe-4S] cluster contacts are provided by cysteine 409, cysteine 412, and cysteine 416.

The protein belongs to the ThiC family. [4Fe-4S] cluster serves as cofactor.

The catalysed reaction is 5-amino-1-(5-phospho-beta-D-ribosyl)imidazole + S-adenosyl-L-methionine = 4-amino-2-methyl-5-(phosphooxymethyl)pyrimidine + CO + 5'-deoxyadenosine + formate + L-methionine + 3 H(+). It functions in the pathway cofactor biosynthesis; thiamine diphosphate biosynthesis. In terms of biological role, catalyzes the synthesis of the hydroxymethylpyrimidine phosphate (HMP-P) moiety of thiamine from aminoimidazole ribotide (AIR) in a radical S-adenosyl-L-methionine (SAM)-dependent reaction. This is Phosphomethylpyrimidine synthase from Clostridium perfringens (strain ATCC 13124 / DSM 756 / JCM 1290 / NCIMB 6125 / NCTC 8237 / Type A).